Here is a 389-residue protein sequence, read N- to C-terminus: S-adenosylmethionine synthase (389 aa).

Histidine 15 lines the ATP pocket. Aspartate 17 contributes to the Mg(2+) binding site. Glutamate 43 contacts K(+). 2 residues coordinate L-methionine: glutamate 56 and glutamine 99. Residues 99–109 are flexible loop; the sequence is QSPDIAQGVNE. ATP is bound by residues 166–168, 234–235, aspartate 243, 249–250, alanine 266, and lysine 270; these read DAK, RF, and RK. An L-methionine-binding site is contributed by aspartate 243. Lysine 274 provides a ligand contact to L-methionine.

This sequence belongs to the AdoMet synthase family. Homotetramer; dimer of dimers. Mg(2+) is required as a cofactor. K(+) serves as cofactor.

The protein localises to the cytoplasm. It carries out the reaction L-methionine + ATP + H2O = S-adenosyl-L-methionine + phosphate + diphosphate. It participates in amino-acid biosynthesis; S-adenosyl-L-methionine biosynthesis; S-adenosyl-L-methionine from L-methionine: step 1/1. Catalyzes the formation of S-adenosylmethionine (AdoMet) from methionine and ATP. The overall synthetic reaction is composed of two sequential steps, AdoMet formation and the subsequent tripolyphosphate hydrolysis which occurs prior to release of AdoMet from the enzyme. The polypeptide is S-adenosylmethionine synthase (Neisseria meningitidis serogroup A / serotype 4A (strain DSM 15465 / Z2491)).